Here is a 148-residue protein sequence, read N- to C-terminus: Pseudoazurin (148 aa).

The N-terminal stretch at 1 to 25 (MMIFRALIAAATLAIAIATTLPAAA) is a signal peptide. One can recognise a Plastocyanin-like domain in the interval 30-118 (VKMLNSGPGG…MGMVALVVVG (89 aa)). The Cu cation site is built by H65, C103, H106, and M111.

Requires Cu cation as cofactor.

The protein localises to the periplasm. This Methylorubrum extorquens (strain ATCC 14718 / DSM 1338 / JCM 2805 / NCIMB 9133 / AM1) (Methylobacterium extorquens) protein is Pseudoazurin.